Consider the following 262-residue polypeptide: tRNA pseudouridine synthase A (262 aa).

Asp-52 acts as the Nucleophile in catalysis. Tyr-110 is a binding site for substrate.

It belongs to the tRNA pseudouridine synthase TruA family. Homodimer.

It catalyses the reaction uridine(38/39/40) in tRNA = pseudouridine(38/39/40) in tRNA. Its function is as follows. Formation of pseudouridine at positions 38, 39 and 40 in the anticodon stem and loop of transfer RNAs. This is tRNA pseudouridine synthase A from Hydrogenovibrio crunogenus (strain DSM 25203 / XCL-2) (Thiomicrospira crunogena).